A 212-amino-acid chain; its full sequence is Large ribosomal subunit protein uL1 (212 aa).

The protein belongs to the universal ribosomal protein uL1 family. As to quaternary structure, part of the 50S ribosomal subunit.

Its function is as follows. Binds directly to 23S rRNA. Probably involved in E site tRNA release. In terms of biological role, protein L1 is also a translational repressor protein, it controls the translation of its operon by binding to its mRNA. The protein is Large ribosomal subunit protein uL1 of Methanothrix thermoacetophila (strain DSM 6194 / JCM 14653 / NBRC 101360 / PT) (Methanosaeta thermophila).